We begin with the raw amino-acid sequence, 528 residues long: Bifunctional purine biosynthesis protein PurH (528 aa).

In terms of domain architecture, MGS-like spans 1-146; the sequence is MAPTALLSVS…KNHDHVAVLT (146 aa).

This sequence belongs to the PurH family.

It catalyses the reaction (6R)-10-formyltetrahydrofolate + 5-amino-1-(5-phospho-beta-D-ribosyl)imidazole-4-carboxamide = 5-formamido-1-(5-phospho-D-ribosyl)imidazole-4-carboxamide + (6S)-5,6,7,8-tetrahydrofolate. It carries out the reaction IMP + H2O = 5-formamido-1-(5-phospho-D-ribosyl)imidazole-4-carboxamide. Its pathway is purine metabolism; IMP biosynthesis via de novo pathway; 5-formamido-1-(5-phospho-D-ribosyl)imidazole-4-carboxamide from 5-amino-1-(5-phospho-D-ribosyl)imidazole-4-carboxamide (10-formyl THF route): step 1/1. The protein operates within purine metabolism; IMP biosynthesis via de novo pathway; IMP from 5-formamido-1-(5-phospho-D-ribosyl)imidazole-4-carboxamide: step 1/1. In Synechococcus sp. (strain WH7803), this protein is Bifunctional purine biosynthesis protein PurH.